The primary structure comprises 223 residues: Pyridoxine/pyridoxamine 5'-phosphate oxidase (223 aa).

Substrate-binding positions include 13–16 (RKNY) and Lys73. Residues 68–73 (RIVLLK), 83–84 (YT), Lys90, and Gln112 each bind FMN. Substrate-binding residues include Tyr130, Arg134, and Ser138. Residues 147–148 (QS) and Trp193 contribute to the FMN site. Substrate is bound at residue 199–201 (RLH). FMN is bound at residue Arg203.

Belongs to the pyridoxamine 5'-phosphate oxidase family. Homodimer. Requires FMN as cofactor.

The enzyme catalyses pyridoxamine 5'-phosphate + O2 + H2O = pyridoxal 5'-phosphate + H2O2 + NH4(+). It carries out the reaction pyridoxine 5'-phosphate + O2 = pyridoxal 5'-phosphate + H2O2. It functions in the pathway cofactor metabolism; pyridoxal 5'-phosphate salvage; pyridoxal 5'-phosphate from pyridoxamine 5'-phosphate: step 1/1. Its pathway is cofactor metabolism; pyridoxal 5'-phosphate salvage; pyridoxal 5'-phosphate from pyridoxine 5'-phosphate: step 1/1. Its function is as follows. Catalyzes the oxidation of either pyridoxine 5'-phosphate (PNP) or pyridoxamine 5'-phosphate (PMP) into pyridoxal 5'-phosphate (PLP). In Rhodopirellula baltica (strain DSM 10527 / NCIMB 13988 / SH1), this protein is Pyridoxine/pyridoxamine 5'-phosphate oxidase.